Here is a 190-residue protein sequence, read N- to C-terminus: Major sperm protein 32 (190 aa).

The region spanning 72–189 is the MSP domain; it reads MIQTQPGTKI…RRKNLPIEYN (118 aa).

Sperm.

It localises to the cell projection. Its subcellular location is the pseudopodium. The protein resides in the cytoplasm. It is found in the cytoskeleton. In terms of biological role, central component in molecular interactions underlying sperm crawling. Forms an extensive filament system that extends from sperm villipoda, along the leading edge of the pseudopod. The chain is Major sperm protein 32 (msp-32) from Caenorhabditis elegans.